The sequence spans 355 residues: Guanine nucleotide-binding protein alpha-12 subunit (355 aa).

The G-alpha domain occupies 28–355; the sequence is RQINLLLLGS…EQNLKTLMMQ (328 aa). The segment at 31–44 is G1 motif; it reads NLLLLGSGESGKST. Residues 36–43, 176–182, 201–205, 270–273, and Ala-327 each bind GTP; these read GSGESGKS, LFCRKAT, DVGGQ, and NKND. Mg(2+) contacts are provided by Ser-43 and Thr-182. Positions 174–182 are G2 motif; sequence DILFCRKAT. Residues 197-206 are G3 motif; sequence FRFIDVGGQR. The interval 266-273 is G4 motif; it reads ILFMNKND. Residues 325–330 form a G5 motif region; it reads TTAVDT.

This sequence belongs to the G-alpha family. G proteins are composed of 3 units; alpha, beta and gamma. The alpha chain contains the guanine nucleotide binding site.

Guanine nucleotide-binding proteins (G proteins) are involved as modulators or transducers in various transmembrane signaling systems. May play a role in resistance to fungal infection in the epidermis by regulating the up-regulation of several antimicrobial peptides of the NLP and CNC families. Upstream of plc-3, egl-8, tpa-1 and the p38-like pathway, required for the expression of antimicrobial peptide nlp-29 in the epidermis in response to fungal infection or physical injury. The polypeptide is Guanine nucleotide-binding protein alpha-12 subunit (gpa-12) (Caenorhabditis briggsae).